The chain runs to 360 residues: Chorismate synthase (360 aa).

Residue R46 coordinates NADP(+). Residues R123–S125, N235–A236, G275, K290–S294, and R316 each bind FMN.

It belongs to the chorismate synthase family. Homotetramer. Requires FMNH2 as cofactor.

The enzyme catalyses 5-O-(1-carboxyvinyl)-3-phosphoshikimate = chorismate + phosphate. It participates in metabolic intermediate biosynthesis; chorismate biosynthesis; chorismate from D-erythrose 4-phosphate and phosphoenolpyruvate: step 7/7. Its function is as follows. Catalyzes the anti-1,4-elimination of the C-3 phosphate and the C-6 proR hydrogen from 5-enolpyruvylshikimate-3-phosphate (EPSP) to yield chorismate, which is the branch point compound that serves as the starting substrate for the three terminal pathways of aromatic amino acid biosynthesis. This reaction introduces a second double bond into the aromatic ring system. The protein is Chorismate synthase of Wolinella succinogenes (strain ATCC 29543 / DSM 1740 / CCUG 13145 / JCM 31913 / LMG 7466 / NCTC 11488 / FDC 602W) (Vibrio succinogenes).